The following is a 301-amino-acid chain: Vomeronasal type-1 receptor 4 (301 aa).

Topologically, residues 1–5 (MASRY) are extracellular. A helical transmembrane segment spans residues 6 to 26 (VAVGMILSQTVVGVLGSFSVL). At 27 to 48 (LHYLSFYCTGCRLRSTDLIVKH) the chain is on the cytoplasmic side. The chain crosses the membrane as a helical span at residues 49–69 (LIVANFLALRCKGVPQTMAAF). Residues 70–88 (GVRYFLNALGCKLVFYLHR) lie on the Extracellular side of the membrane. Residues 89 to 109 (VGRGVSIGTTCLLSVFQVITV) form a helical membrane-spanning segment. The Cytoplasmic portion of the chain corresponds to 110-126 (SSRKSRWAKLKEKAPKH). A helical transmembrane segment spans residues 127-147 (VGFSVLLCWIVCMLVNIIFPM). At 148–185 (YVTGKWNYTNITVNEDLGYCSGGGNNKIAQTLRAMLLS) the chain is on the extracellular side. 2 N-linked (GlcNAc...) asparagine glycosylation sites follow: Asn154 and Asn157. The chain crosses the membrane as a helical span at residues 186 to 206 (FPDVLCLGLMLWVSSSMVCIL). The Cytoplasmic portion of the chain corresponds to 207 to 234 (HRHKQRVQHIDRSNLSPRASPENRATQS). Residues 235–255 (ILILVSTFVSSYTLSCLFQVC) traverse the membrane as a helical segment. Residues 256–264 (MALLDNPNS) are Extracellular-facing. Residues 265 to 285 (LLVNTSALMSVCFPTLSPFVL) form a helical membrane-spanning segment. Residues 286–301 (MSCDPSVYRFCFAWKR) lie on the Cytoplasmic side of the membrane.

Belongs to the G-protein coupled receptor 1 family.

The protein localises to the cell membrane. Functionally, putative pheromone receptor. The protein is Vomeronasal type-1 receptor 4 (VN1R4) of Homo sapiens (Human).